An 83-amino-acid chain; its full sequence is Cytotoxin homolog 5V (83 aa).

The first 21 residues, 1-21 (MKTLLLTLVVVTIVCLDLGYT), serve as a signal peptide directing secretion. Intrachain disulfides connect Cys24/Cys43, Cys36/Cys61, Cys65/Cys76, and Cys77/Cys82.

It belongs to the three-finger toxin family. Short-chain subfamily. Orphan group XV sub-subfamily. Expressed by the venom gland.

Its subcellular location is the secreted. It localises to the target cell membrane. Has low cytotoxic activity. In Naja atra (Chinese cobra), this protein is Cytotoxin homolog 5V.